We begin with the raw amino-acid sequence, 201 residues long: Molybdenum cofactor guanylyltransferase (201 aa).

GTP-binding positions include 14-16, Lys31, and Asp104; that span reads LAG. Asp104 provides a ligand contact to Mg(2+).

It belongs to the MobA family. As to quaternary structure, monomer. Mg(2+) serves as cofactor.

It is found in the cytoplasm. The enzyme catalyses Mo-molybdopterin + GTP + H(+) = Mo-molybdopterin guanine dinucleotide + diphosphate. Transfers a GMP moiety from GTP to Mo-molybdopterin (Mo-MPT) cofactor (Moco or molybdenum cofactor) to form Mo-molybdopterin guanine dinucleotide (Mo-MGD) cofactor. This is Molybdenum cofactor guanylyltransferase from Helicobacter pylori (strain P12).